The sequence spans 782 residues: MEVRKLSISWQFLIVLVLILQILSALDFDPYRVLGVSRTASQADIKKAYKKLAREWHPDKNKDPGAEDKFIQISKAYEILSNEEKRSNYDQYGDAGENQGYQKQQQQREYRFRHFHENFYFDESFFHFPFNSERRDSIDEKYLLHFSHYVNEVVPDSFKKPYLIKITSDWCFSCIHIEPVWKEVIQELEELGVGIGVVHAGYERRLAHHLGAHSTPSILGIINGKISFFHNAVVRENLRQFVESLLPGNLVEKVTNKNYVRFLSGWQQENKPHVLLFDQTPIVPLLYKLTAFAYKDYLSFGYVYVGLRGTEEMTRRYNINIYAPTLLVFKEHINRPADVIQARGMKKQIIDDFITRNKYLLAARLTSQKLFHELCPVKRSHRQRKYCVVLLTAETTKLSKPFEAFLSFALANTQDTVRFVHVYSNRQQEFADTLLPDSEAFQGKSAVSILERRNTAGRVVYKTLEDPWIGSESDKFILLGYLDQLRKDPALLSSEAVLPDLTDELAPVFLLRWFYSASDYISDCWDSIFHNNWREMMPLLSLIFSALFILFGTVIVQAFSDSNDERESSPPEKEEAQEKTGKTEPSFTKENSSKIPKKGFVEVTELTDVTYTSNLVRLRPGHMNVVLILSNSTKTSLLQKFALEVYTFTGSSCLHFSFLSLDKHREWLEYLLEFAQDAAPIPNQYDKHFMERDYTGYVLALNGHKKYFCLFKPQKTVEEEEAIGSCSDVDSSLYLGESRGKPSCGLGSRPIKGKLSKLSLWMERLLEGSLQRFYIPSWPELD.

Residues 1–25 (MEVRKLSISWQFLIVLVLILQILSA) form the signal peptide. At 26 to 535 (LDFDPYRVLG…DSIFHNNWRE (510 aa)) the chain is on the cytoplasmic side. Residues 29–93 (DPYRVLGVSR…EKRSNYDQYG (65 aa)) form the J domain. A Thioredoxin domain is found at 119-247 (FYFDESFFHF…LRQFVESLLP (129 aa)). The chain crosses the membrane as a helical; Anchor for type IV membrane protein span at residues 536–556 (MMPLLSLIFSALFILFGTVIV). Residues 557–782 (QAFSDSNDER…FYIPSWPELD (226 aa)) lie on the Extracellular side of the membrane. The interval 562–593 (SNDERESSPPEKEEAQEKTGKTEPSFTKENSS) is disordered. The span at 563 to 582 (NDERESSPPEKEEAQEKTGK) shows a compositional bias: basic and acidic residues. Over residues 583-593 (TEPSFTKENSS) the composition is skewed to polar residues. An N-linked (GlcNAc...) asparagine glycan is attached at N631.

The protein resides in the endoplasmic reticulum membrane. In terms of biological role, plays an important role in regulating the size of autophagosomes during the formation process. This is DnaJ homolog subfamily C member 16 (DNAJC16) from Homo sapiens (Human).